Reading from the N-terminus, the 395-residue chain is Digeranylgeranylglycerophospholipid reductase (395 aa).

FAD is bound by residues alanine 15, aspartate 34, cysteine 45, alanine 46, alanine 48, arginine 97, alanine 121, aspartate 276, and glycine 288. Arginine 329 serves as a coordination point for a 2,3-bis-O-(geranylgeranyl)-sn-glycerol 1-phospholipid.

Belongs to the geranylgeranyl reductase family. DGGGPL reductase subfamily. It depends on FAD as a cofactor.

It carries out the reaction a 2,3-bis-O-phytanyl-sn-glycerol 1-phospholipid + 8 A = a 2,3-bis-O-(geranylgeranyl)-sn-glycerol 1-phospholipid + 8 AH2. It catalyses the reaction 2,3-bis-O-(phytanyl)-sn-glycerol 1-phosphate + 8 A = 2,3-bis-O-(geranylgeranyl)-sn-glycerol 1-phosphate + 8 AH2. The enzyme catalyses CDP-2,3-bis-O-(geranylgeranyl)-sn-glycerol + 8 AH2 = CDP-2,3-bis-O-(phytanyl)-sn-glycerol + 8 A. The catalysed reaction is archaetidylserine + 8 AH2 = 2,3-bis-O-phytanyl-sn-glycero-3-phospho-L-serine + 8 A. The protein operates within membrane lipid metabolism; glycerophospholipid metabolism. In terms of biological role, is involved in the reduction of 2,3-digeranylgeranylglycerophospholipids (unsaturated archaeols) into 2,3-diphytanylglycerophospholipids (saturated archaeols) in the biosynthesis of archaeal membrane lipids. Catalyzes the formation of archaetidic acid (2,3-di-O-phytanyl-sn-glyceryl phosphate) from 2,3-di-O-geranylgeranylglyceryl phosphate (DGGGP) via the hydrogenation of each double bond of the isoprenoid chains. Is also probably able to reduce double bonds of geranyl groups in CDP-2,3-bis-O-(geranylgeranyl)-sn-glycerol and archaetidylserine, thus acting at various stages in the biosynthesis of archaeal membrane lipids. This chain is Digeranylgeranylglycerophospholipid reductase, found in Thermococcus kodakarensis (strain ATCC BAA-918 / JCM 12380 / KOD1) (Pyrococcus kodakaraensis (strain KOD1)).